Here is a 229-residue protein sequence, read N- to C-terminus: Putative N-acetylmannosamine-6-phosphate 2-epimerase 2 (229 aa).

This sequence belongs to the NanE family.

The enzyme catalyses an N-acyl-D-glucosamine 6-phosphate = an N-acyl-D-mannosamine 6-phosphate. It participates in amino-sugar metabolism; N-acetylneuraminate degradation; D-fructose 6-phosphate from N-acetylneuraminate: step 3/5. Functionally, converts N-acetylmannosamine-6-phosphate (ManNAc-6-P) to N-acetylglucosamine-6-phosphate (GlcNAc-6-P). In Salmonella typhimurium (strain LT2 / SGSC1412 / ATCC 700720), this protein is Putative N-acetylmannosamine-6-phosphate 2-epimerase 2 (nanE2).